Reading from the N-terminus, the 375-residue chain is Alcohol dehydrogenase 1C (375 aa).

Ser2 is modified (N-acetylserine). Ser23 bears the Phosphoserine mark. 7 residues coordinate Zn(2+): Cys47, His68, Cys98, Cys101, Cys104, Cys112, and Cys175. NAD(+) is bound by residues 200–205, Asp224, Lys229, Ile270, 293–295, 318–320, and Arg370; these read GLGGVG, VGV, and AIF.

This sequence belongs to the zinc-containing alcohol dehydrogenase family. Dimer of identical or non-identical chains of class I alcohol dehydrogenase: ADH1A, ADH1B, and ADH1C. Zn(2+) serves as cofactor.

The protein localises to the cytoplasm. The enzyme catalyses a primary alcohol + NAD(+) = an aldehyde + NADH + H(+). It carries out the reaction ethanol + NAD(+) = acetaldehyde + NADH + H(+). Alcohol dehydrogenase. Exhibits high activity for ethanol oxidation and plays a major role in ethanol catabolism. The polypeptide is Alcohol dehydrogenase 1C (ADH1C) (Homo sapiens (Human)).